The chain runs to 559 residues: SH3 domain-binding protein 2 (559 aa).

Residues 26 to 130 (GVAKAGYLHK…WMAFVRREIG (105 aa)) enclose the PH domain. Residues 164 to 449 (LSSYPMDNED…EDSDEDYEKV (286 aa)) form a disordered region. Over residues 170–184 (DNEDYEHEDEDDSYL) the composition is skewed to acidic residues. Tyr174 and Tyr183 each carry phosphotyrosine; by SYK. An SH3-binding motif is present at residues 201–210 (PPAYPPPPVP). Composition is skewed to pro residues over residues 202 to 213 (PAYPPPPVPVPR) and 233 to 242 (PLLPPPPPKR). The segment covering 252–265 (EDAKDALGLRRVEP) has biased composition (basic and acidic residues). Position 277 is a phosphoserine (Ser277). Residues 313–327 (TSSVSSSTTMAVATS) show a composition bias toward low complexity. The span at 360 to 371 (KIAEEPSPREAA) shows a compositional bias: basic and acidic residues. Positions 375-386 (PVPPVAPRPPVQ) are enriched in pro residues. Residues Ser414 and Ser425 each carry the phosphoserine modification. The span at 437–446 (TGEEDSDEDY) shows a compositional bias: acidic residues. Tyr446 is subject to Phosphotyrosine; by SYK. One can recognise an SH2 domain in the interval 455–553 (VFVNTTESCE…HQSLLLRHPY (99 aa)).

Phosphorylated. Phosphorylation at Tyr-446 may stimulate the activity of the LYN kinase.

In terms of biological role, binds differentially to the SH3 domains of certain proteins of signal transduction pathways. Binds to phosphatidylinositols; linking the hemopoietic tyrosine kinase fes to the cytoplasmic membrane in a phosphorylation dependent mechanism. The sequence is that of SH3 domain-binding protein 2 (Sh3bp2) from Mus musculus (Mouse).